The chain runs to 187 residues: Elongation factor P (187 aa).

The protein belongs to the elongation factor P family.

The protein localises to the cytoplasm. It participates in protein biosynthesis; polypeptide chain elongation. Functionally, involved in peptide bond synthesis. Stimulates efficient translation and peptide-bond synthesis on native or reconstituted 70S ribosomes in vitro. Probably functions indirectly by altering the affinity of the ribosome for aminoacyl-tRNA, thus increasing their reactivity as acceptors for peptidyl transferase. The protein is Elongation factor P of Wolinella succinogenes (strain ATCC 29543 / DSM 1740 / CCUG 13145 / JCM 31913 / LMG 7466 / NCTC 11488 / FDC 602W) (Vibrio succinogenes).